A 161-amino-acid polypeptide reads, in one-letter code: uncharacterized protein (161 aa).

The disordered stretch occupies residues 126–161 (TPSNCGESSTSSGQSSGDESNCSLRTHGVYTRGEQH). Residues 128–148 (SNCGESSTSSGQSSGDESNCS) show a composition bias toward low complexity.

This sequence belongs to the herpesviridae US1 family.

This is an uncharacterized protein from Human cytomegalovirus (strain AD169) (HHV-5).